A 341-amino-acid chain; its full sequence is S-adenosylmethionine:tRNA ribosyltransferase-isomerase (341 aa).

Belongs to the QueA family. Monomer.

It localises to the cytoplasm. The catalysed reaction is 7-aminomethyl-7-carbaguanosine(34) in tRNA + S-adenosyl-L-methionine = epoxyqueuosine(34) in tRNA + adenine + L-methionine + 2 H(+). The protein operates within tRNA modification; tRNA-queuosine biosynthesis. Transfers and isomerizes the ribose moiety from AdoMet to the 7-aminomethyl group of 7-deazaguanine (preQ1-tRNA) to give epoxyqueuosine (oQ-tRNA). The protein is S-adenosylmethionine:tRNA ribosyltransferase-isomerase of Staphylococcus aureus (strain Mu3 / ATCC 700698).